The sequence spans 477 residues: MSSSRKDHLGASSSEPLPVIIVGNGPSGICLSYLLSGYTPYTKPDAIHPHPLLQRKLTEAPGVSILDQDLDYLSEGLEGRSQSPVALLFDALLRPDTDFGGNMKSVLTWKHRKEHAIPHVVLGRNLPGGAWHSIEGSMVILSQGQWMGLPDLEVKDWMQKKRRGLRNSRATAGDIAHYYRDYVVKKGLGHNFVSGAVVTAVEWGTPDPSSCGAQDSSPLFQVSGFLTRNQAQQPFSLWARNVVLATGTFDSPARLGIPGEALPFIHHELSALEAATRVGAVTPASDPVLIIGAGLSAADAVLYARHYNIPVIHAFRRAVDDPGLVFNQLPKMLYPEYHKVHQMMREQSILSPSPYEGYRSLPRHQLLCFKEDCQAVFQDLEGVEKVFGVSLVLVLIGSHPDLSFLPGAGADFAVDPDQPLSAKRNPIDVDPFTYQSTRQEGLYAMGPLAGDNFVRFVQGGALAVASSLLRKETRKPP.

Ser12 is subject to Phosphoserine.

Belongs to the OKL38 family. The cofactor is NADPH. Ubiquitous. Highest expression in the ovary, testis, kidney, skeletal muscle and liver.

The protein localises to the midbody. In terms of biological role, monooxygenase catalytic activity. Involved in regulation of cytokinesis; promotes RHOA activity, probably acting locally at the midbody in late cytokinesis. Monooxygenase activity is involved in stabilizing transient structures between daughter cells, termed intercellular bridges, before abscission. Regulates differentiation and proliferation through the regulation of cell death. The chain is Oxidative stress-induced growth inhibitor 1 from Homo sapiens (Human).